The sequence spans 961 residues: Glycine dehydrogenase (decarboxylating) (961 aa).

K702 is subject to N6-(pyridoxal phosphate)lysine.

The protein belongs to the GcvP family. As to quaternary structure, the glycine cleavage system is composed of four proteins: P, T, L and H. It depends on pyridoxal 5'-phosphate as a cofactor.

The catalysed reaction is N(6)-[(R)-lipoyl]-L-lysyl-[glycine-cleavage complex H protein] + glycine + H(+) = N(6)-[(R)-S(8)-aminomethyldihydrolipoyl]-L-lysyl-[glycine-cleavage complex H protein] + CO2. Its function is as follows. The glycine cleavage system catalyzes the degradation of glycine. The P protein binds the alpha-amino group of glycine through its pyridoxal phosphate cofactor; CO(2) is released and the remaining methylamine moiety is then transferred to the lipoamide cofactor of the H protein. This is Glycine dehydrogenase (decarboxylating) from Rhodopseudomonas palustris (strain BisA53).